Consider the following 65-residue polypeptide: MITDPKMLELLVCPITGGTLSLNRKTQELISFKAKLAYPIRDGVPIMLASEARPLQHNEKRVHKK.

Belongs to the UPF0434 family.

The sequence is that of UPF0434 protein BQ10150 from Bartonella quintana (strain Toulouse) (Rochalimaea quintana).